Here is a 292-residue protein sequence, read N- to C-terminus: Lipoyl synthase (292 aa).

7 residues coordinate [4Fe-4S] cluster: Cys-34, Cys-39, Cys-45, Cys-60, Cys-64, Cys-67, and Ser-273. The Radical SAM core domain maps to 46–262 (WNKKHATVMI…KYVAYSKGFL (217 aa)).

This sequence belongs to the radical SAM superfamily. Lipoyl synthase family. The cofactor is [4Fe-4S] cluster.

The protein localises to the cytoplasm. The enzyme catalyses [[Fe-S] cluster scaffold protein carrying a second [4Fe-4S](2+) cluster] + N(6)-octanoyl-L-lysyl-[protein] + 2 oxidized [2Fe-2S]-[ferredoxin] + 2 S-adenosyl-L-methionine + 4 H(+) = [[Fe-S] cluster scaffold protein] + N(6)-[(R)-dihydrolipoyl]-L-lysyl-[protein] + 4 Fe(3+) + 2 hydrogen sulfide + 2 5'-deoxyadenosine + 2 L-methionine + 2 reduced [2Fe-2S]-[ferredoxin]. The protein operates within protein modification; protein lipoylation via endogenous pathway; protein N(6)-(lipoyl)lysine from octanoyl-[acyl-carrier-protein]: step 2/2. Its function is as follows. Catalyzes the radical-mediated insertion of two sulfur atoms into the C-6 and C-8 positions of the octanoyl moiety bound to the lipoyl domains of lipoate-dependent enzymes, thereby converting the octanoylated domains into lipoylated derivatives. This is Lipoyl synthase from Ehrlichia ruminantium (strain Welgevonden).